The primary structure comprises 364 residues: Anhydro-N-acetylmuramic acid kinase (364 aa).

11–18 (GSSLDGID) contributes to the ATP binding site.

Belongs to the anhydro-N-acetylmuramic acid kinase family.

It carries out the reaction 1,6-anhydro-N-acetyl-beta-muramate + ATP + H2O = N-acetyl-D-muramate 6-phosphate + ADP + H(+). The protein operates within amino-sugar metabolism; 1,6-anhydro-N-acetylmuramate degradation. It functions in the pathway cell wall biogenesis; peptidoglycan recycling. Its function is as follows. Catalyzes the specific phosphorylation of 1,6-anhydro-N-acetylmuramic acid (anhMurNAc) with the simultaneous cleavage of the 1,6-anhydro ring, generating MurNAc-6-P. Is required for the utilization of anhMurNAc either imported from the medium or derived from its own cell wall murein, and thus plays a role in cell wall recycling. This Pseudomonas syringae pv. tomato (strain ATCC BAA-871 / DC3000) protein is Anhydro-N-acetylmuramic acid kinase.